We begin with the raw amino-acid sequence, 329 residues long: Holliday junction branch migration complex subunit RuvB (329 aa).

Positions 1–181 are large ATPase domain (RuvB-L); sequence MNELLHQHKA…FGIPLHLEFY (181 aa). 9 residues coordinate ATP: Leu-20, Arg-21, Gly-62, Lys-65, Thr-66, Thr-67, Arg-171, Tyr-181, and Arg-218. Thr-66 is a Mg(2+) binding site. A small ATPAse domain (RuvB-S) region spans residues 182 to 252; the sequence is SVEELMLVIK…FADSALFNLG (71 aa). The tract at residues 255-329 is head domain (RuvB-H); the sequence is KSGLDKMDIK…IEHLMNYKYI (75 aa). Residues Arg-308 and Arg-313 each coordinate DNA.

This sequence belongs to the RuvB family. Homohexamer. Forms an RuvA(8)-RuvB(12)-Holliday junction (HJ) complex. HJ DNA is sandwiched between 2 RuvA tetramers; dsDNA enters through RuvA and exits via RuvB. An RuvB hexamer assembles on each DNA strand where it exits the tetramer. Each RuvB hexamer is contacted by two RuvA subunits (via domain III) on 2 adjacent RuvB subunits; this complex drives branch migration. In the full resolvosome a probable DNA-RuvA(4)-RuvB(12)-RuvC(2) complex forms which resolves the HJ.

It localises to the cytoplasm. The catalysed reaction is ATP + H2O = ADP + phosphate + H(+). Its function is as follows. The RuvA-RuvB-RuvC complex processes Holliday junction (HJ) DNA during genetic recombination and DNA repair, while the RuvA-RuvB complex plays an important role in the rescue of blocked DNA replication forks via replication fork reversal (RFR). RuvA specifically binds to HJ cruciform DNA, conferring on it an open structure. The RuvB hexamer acts as an ATP-dependent pump, pulling dsDNA into and through the RuvAB complex. RuvB forms 2 homohexamers on either side of HJ DNA bound by 1 or 2 RuvA tetramers; 4 subunits per hexamer contact DNA at a time. Coordinated motions by a converter formed by DNA-disengaged RuvB subunits stimulates ATP hydrolysis and nucleotide exchange. Immobilization of the converter enables RuvB to convert the ATP-contained energy into a lever motion, pulling 2 nucleotides of DNA out of the RuvA tetramer per ATP hydrolyzed, thus driving DNA branch migration. The RuvB motors rotate together with the DNA substrate, which together with the progressing nucleotide cycle form the mechanistic basis for DNA recombination by continuous HJ branch migration. Branch migration allows RuvC to scan DNA until it finds its consensus sequence, where it cleaves and resolves cruciform DNA. The protein is Holliday junction branch migration complex subunit RuvB of Anaplasma phagocytophilum (strain HZ).